A 561-amino-acid polypeptide reads, in one-letter code: Oxygen-dependent choline dehydrogenase (561 aa).

Position 7–36 (7–36 (DYIIVGAGSAGNVLASRLTEDADVTVLLLE)) interacts with FAD. His-474 acts as the Proton acceptor in catalysis.

This sequence belongs to the GMC oxidoreductase family. FAD is required as a cofactor.

It catalyses the reaction choline + A = betaine aldehyde + AH2. The enzyme catalyses betaine aldehyde + NAD(+) + H2O = glycine betaine + NADH + 2 H(+). It functions in the pathway amine and polyamine biosynthesis; betaine biosynthesis via choline pathway; betaine aldehyde from choline (cytochrome c reductase route): step 1/1. Its function is as follows. Involved in the biosynthesis of the osmoprotectant glycine betaine. Catalyzes the oxidation of choline to betaine aldehyde and betaine aldehyde to glycine betaine at the same rate. This is Oxygen-dependent choline dehydrogenase from Paraburkholderia phytofirmans (strain DSM 17436 / LMG 22146 / PsJN) (Burkholderia phytofirmans).